A 497-amino-acid chain; its full sequence is MPLVTRNIEPRHLCRQTLPSDTSELECRTNITLANVIRQLGSLSKYAEDIFGEICTQASAFASRVNSLAERVDRVQVKVTQLDPKEEEVSLQGINTRKAFRSSTTQDQKLFDRNSLPVPVLETYNSCDAPPPLNNLSPYRDDGKEALKFYTNPSYFFDLWKEKMLQDTKDIMKEKRKHRKEKKDNPNRGNVNPRKIKTRKEEWEKMKMGQEFVESKERLGPSGYSSTLVYQNGSIGSVENVDAASYPPPPQSDSASSPSPSFSEDNLPPPPAEFSYPADNQRGSVLAGPKRTSMVSPSHPPPAPPLSSPPGPKPGFAPPPAPPPPPPMSVPPPLPSMGFGSPGTPPPPSPPSFPPHPDFAAPPPPPPPPAADYPMPPPPLSQPSGGAPPPPPPPPPPGPPPLPFSGADGQPAAPPPPPPSEATKPKSSLPAVSDARSDLLSAIRQGFQLRRVEEQREQEKRDVVGNDVATILSRRIAVEYSDSEDDSSEFDEDDWSD.

Disordered stretches follow at residues 173 to 203 (KEKRKHRKEKKDNPNRGNVNPRKIKTRKEEW) and 239 to 436 (ENVD…SDAR). Positions 252 to 263 (SDSASSPSPSFS) are enriched in low complexity. Composition is skewed to pro residues over residues 298–335 (SHPPPAPPLSSPPGPKPGFAPPPAPPPPPPMSVPPPLP) and 343–403 (GTPP…PPLP). Residues 435 to 452 (ARSDLLSAIRQGFQLRRV) form the WH2 domain. Position 473 is a phosphoserine (serine 473).

It belongs to the SCAR/WAVE family. Binds actin and the Arp2/3 complex. Interacts with BAIAP2. Component of the WAVE2 complex composed of ABI1, CYFIP1/SRA1, NCKAP1/NAP1 (NCKAP1l/HEM1 in hematopoietic cells) and WASF2/WAVE2. Directly interacts with BRK1. Interacts with human cytomegalovirus protein UL135. Interacts with FNBP1L (via the SH3 domain).

It localises to the cytoplasm. It is found in the cytoskeleton. The protein localises to the cell projection. Its subcellular location is the lamellipodium. The protein resides in the basolateral cell membrane. Its function is as follows. Downstream effector molecule involved in the transmission of signals from tyrosine kinase receptors and small GTPases to the actin cytoskeleton. Promotes formation of actin filaments. Part of the WAVE complex that regulates lamellipodia formation. The WAVE complex regulates actin filament reorganization via its interaction with the Arp2/3 complex. This chain is Actin-binding protein WASF2, found in Mus musculus (Mouse).